A 1166-amino-acid chain; its full sequence is Calcium-activated potassium channel subunit alpha-1 (1166 aa).

Gly residues predominate over residues 1–15 (MANGGGGGGGGGGGS). Disordered regions lie at residues 1 to 20 (MANG…LRMS) and 30 to 51 (LDAS…SVHE). Topologically, residues 1–74 (MANGGGGGGG…VPCDSRGQRM (74 aa)) are extracellular. Low complexity predominate over residues 33–48 (SSSSSSSSSSSSSSSS). A helical membrane pass occupies residues 75–95 (WWAFLASSMVTFFGGLFIILL). Topologically, residues 96 to 166 (WRTLKYLWTV…MISAQTLTGR (71 aa)) are cytoplasmic. 3 S-palmitoyl cysteine lipidation sites follow: C106, C107, and C109. Position 139 is a phosphothreonine; by CamK2 (T139). Residues 167 to 187 (VLVVLVFALSIGALVIYFIDS) form a helical membrane-spanning segment. The Extracellular portion of the chain corresponds to 188–202 (SNPIESCQNFYKDFT). Residues 203–223 (LQIDMAFNVFFLLYFGLRFIA) traverse the membrane as a helical segment. At 224–227 (ANDK) the chain is on the cytoplasmic side. Residues 228–248 (LWFWLEVNSVVDFFTVPPVFV) form a helical membrane-spanning segment. Over 249 to 252 (SVYL) the chain is Extracellular. A helical; Voltage-sensor membrane pass occupies residues 253-273 (NRSWLGLRFLRALRLIQFSEI). At 274–288 (LQFLNILKTSNSIKL) the chain is on the cytoplasmic side. The chain crosses the membrane as a helical span at residues 289–309 (VNLLSIFISTWLTAAGFIHLV). Topologically, residues 310-323 (ENSGDPWENFQNNQ) are extracellular. The segment at residues 324–346 (ALTYWECVYLLMVTMSTVGYGDV) is an intramembrane region (pore-forming). The Selectivity for potassium signature appears at 340–343 (TVGY). The Extracellular portion of the chain corresponds to 347 to 355 (YAKTTLGRL). The helical transmembrane segment at 356–376 (FMVFFILGGLAMFASYVPEII) threads the bilayer. The Cytoplasmic portion of the chain corresponds to 377 to 1166 (ELIGNRKKYG…KQKYVQEERL (790 aa)). Positions 395–537 (RKHIVVCGHI…WNWKEGDDAI (143 aa)) constitute an RCK N-terminal 1 domain. Mg(2+) contacts are provided by E427, Q450, and E452. The interval 544–564 (LGFIAQSCLAQGLSTMLANLF) is segment S7. The segment S8 stretch occupies residues 601–621 (LSFPTVCELCFVKLKLLMIAI). The interval 665 to 669 (CKACH) is heme-binding motif. The disordered stretch occupies residues 689-717 (EQPSTLSPKKKQRNGGMRNSPSSSPKLMR). A Phosphothreonine modification is found at T693. 3 positions are modified to phosphoserine: S695, S708, and S712. Residues 767-787 (VLSGHVVVCIFGDVSSALIGL) form a segment S9 region. An RCK N-terminal 2 domain is found at 769–913 (SGHVVVCIFG…MDRSSPDNSP (145 aa)). At T900 the chain carries Phosphothreonine. Phosphoserine occurs at positions 908 and 912. The Calcium bowl signature appears at 933 to 955 (TELVNDTNVQFLDQDDDDDPDTE). Residues Q942, D945, D948, and D950 each contribute to the Ca(2+) site. The segment at 962 to 982 (FACGTAFAVSVLDSLMSATYF) is segment S10. Positions 1116-1141 (RASLSHSSHSSQSSSKKSSSVHSIPS) are enriched in low complexity. The disordered stretch occupies residues 1116–1166 (RASLSHSSHSSQSSSKKSSSVHSIPSTANRQNRPKSRESRDKQKYVQEERL). A compositionally biased stretch (basic and acidic residues) spans 1150–1166 (KSRESRDKQKYVQEERL). S1151 and S1154 each carry phosphoserine; by PKG.

It belongs to the potassium channel family. Calcium-activated (TC 1.A.1.3) subfamily. KCa1.1/KCNMA1 sub-subfamily. As to quaternary structure, homotetramer; which constitutes the calcium-activated potassium channel. Interacts with beta subunits KCNMB1, KCNMB2, KCNMB3 and KCNMB4. Interacts with gamma subunits LRRC26, LRRC38, LRRC52 and LRRC55. Beta and gamma subunits are accessory, and modulate its activity. Interacts with RAB11B. Post-translationally, phosphorylated. Stimulated by PKG, but not by PKA. In smooth muscles, phosphorylation affects its activity. In terms of processing, phosphorylated. Exclusively stimulated by PKA. In smooth muscles, phosphorylation affects its activity. Incremental phosphorylation of Thr-139 of the KCNMA1 tetramer changes the response to ethanol from increased activation to inhibition of channel activity. Post-translationally, palmitoylation by ZDHHC22 and ZDHHC23 within the intracellular linker between the S0 and S1 transmembrane domains regulates localization to the plasma membrane. Depalmitoylated by LYPLA1 and LYPLAL1, leading to retard exit from the trans-Golgi network.

It localises to the cell membrane. The catalysed reaction is K(+)(in) = K(+)(out). Its activity is regulated as follows. Ethanol and carbon monoxide-bound heme increase channel activation. Heme inhibits channel activation. Phosphorylation of Thr-139 leads to inhibition of channel activity by ethanol. Potassium channel activated by both membrane depolarization or increase in cytosolic Ca(2+) that mediates export of K(+). It is also activated by concentration of cytosolic Mg(2+). Its activation dampens the excitatory events that elevate the cytosolic Ca(2+) concentration and/or depolarize the cell membrane. It therefore contributes to repolarization of the membrane potential. Plays a key role in controlling excitability in a number of systems, such as regulation of the contraction of smooth muscle, the tuning of hair cells in the cochlea, regulation of transmitter release, and innate immunity. In smooth muscles, its activation by high level of Ca(2+), caused by ryanodine receptors in the sarcoplasmic reticulum, regulates the membrane potential. In cochlea cells, its number and kinetic properties partly determine the characteristic frequency of each hair cell and thereby helps to establish a tonotopic map. Kinetics of KCNMA1 channels are determined by alternative splicing, phosphorylation status and its combination with modulating beta subunits. Highly sensitive to both iberiotoxin (IbTx) and charybdotoxin (CTX). In Bos taurus (Bovine), this protein is Calcium-activated potassium channel subunit alpha-1 (KCNMA1).